Here is a 219-residue protein sequence, read N- to C-terminus: Vacuolar protein sorting-associated protein 20 homolog 1 (219 aa).

Residues 20–60 (SLKTQRRKLGQYQQKLEKVIEAEKQAARDLIREKRKDRALL) adopt a coiled-coil conformation. Residues 171 to 219 (PEVPTKESEESEKLDLPDVPTKTPVASNAEITPAESATKTKVLEEPLPA) are disordered. Residues 174–186 (PTKESEESEKLDL) are compositionally biased toward basic and acidic residues. A compositionally biased stretch (polar residues) spans 194–209 (PVASNAEITPAESATK).

It belongs to the SNF7 family. Component of the endosomal sorting required for transport complex III (ESCRT-III), composed at least of VPS2, VPS20, VPS24 and VPS32. Interacts with SKD1.

The protein localises to the endosome. Functionally, component of the ESCRT-III complex, which is required for multivesicular bodies (MVBs) formation and sorting of endosomal cargo proteins into MVBs. The ESCRT-III complex is probably involved in the concentration of MVB cargo. The sequence is that of Vacuolar protein sorting-associated protein 20 homolog 1 (VPS20.1) from Arabidopsis thaliana (Mouse-ear cress).